Consider the following 511-residue polypeptide: uncharacterized protein (511 aa).

The 33-residue stretch at 13–45 folds into the LisH domain; the sequence is IYDALNMLVYDYLLKMKYEGSAKIFFNEAGLEN. Residues 172–212 form a disordered region; it reads PRFEEQGVPPAKMAPKQFRDEGRSGNVESPSIATNQEGSSP. A compositionally biased stretch (polar residues) spans 197–210; that stretch reads NVESPSIATNQEGS.

This is an uncharacterized protein from Encephalitozoon cuniculi (strain GB-M1) (Microsporidian parasite).